A 235-amino-acid polypeptide reads, in one-letter code: Carboxy-S-adenosyl-L-methionine synthase (235 aa).

S-adenosyl-L-methionine is bound by residues Tyr-35, 60–62, 84–85, 110–111, Asn-125, and Arg-192; these read GCS, DN, and DI.

Belongs to the class I-like SAM-binding methyltransferase superfamily. Cx-SAM synthase family. In terms of assembly, homodimer.

The catalysed reaction is prephenate + S-adenosyl-L-methionine = carboxy-S-adenosyl-L-methionine + 3-phenylpyruvate + H2O. Functionally, catalyzes the conversion of S-adenosyl-L-methionine (SAM) to carboxy-S-adenosyl-L-methionine (Cx-SAM). The polypeptide is Carboxy-S-adenosyl-L-methionine synthase (Sulfurimonas denitrificans (strain ATCC 33889 / DSM 1251) (Thiomicrospira denitrificans (strain ATCC 33889 / DSM 1251))).